A 339-amino-acid chain; its full sequence is Annexin A2 (339 aa).

Serine 2 is modified (N-acetylserine). Residues 2 to 24 (STVHEILCKLSLEGDHSTPASAY) are S100A10-binding site. At tyrosine 24 the chain carries Phosphotyrosine; by SRC. Serine 26 carries the phosphoserine; by PKC modification. Annexin repeat units follow at residues 33 to 104 (FDAE…GLLK) and 105 to 176 (TPAQ…ALAK). Position 49 is an N6-acetyllysine; alternate (lysine 49). A Glycyl lysine isopeptide (Lys-Gly) (interchain with G-Cter in SUMO1); alternate cross-link involves residue lysine 49. Lysine 49 is covalently cross-linked (Glycyl lysine isopeptide (Lys-Gly) (interchain with G-Cter in SUMO2); alternate). N6-acetyllysine is present on lysine 152. The residue at position 184 (serine 184) is a Phosphoserine. Annexin repeat units lie at residues 189–261 (ELID…NLVQ) and 265–336 (NKPL…YLCG). The residue at position 199 (tyrosine 199) is a Phosphotyrosine. Lysine 227 carries the post-translational modification N6-acetyllysine.

This sequence belongs to the annexin family. In terms of assembly, heterotetramer containing 2 light chains of S100A10/p11 and 2 heavy chains of ANXA2/p36. Interacts with ATP1B1. Interacts with DYSF. Interacts with COCH. Interacts (via repeat Annexin 1) with PCSK9 (via the C-terminal domain); the interaction inhibits the degradation of LDLR. Interacts with CEACAM1 (via the cytoplasmic domain); this interaction is regulated by phosphorylation of CEACAM1. Interacts with APPL2 and APPL1; targets APPL2 to endosomes and acting in parallel to RAB5A. Interacts with S100A4. May interact with UBAP2. Interacts with PLEKHG4B; this interaction is required for PLEKHG4B localization to cell-cell adhesions. As to quaternary structure, (Microbial infection) Interacts with classical swine fever virus envelope glycoprotein E2. ISGylated.

The protein localises to the secreted. It is found in the extracellular space. It localises to the extracellular matrix. The protein resides in the basement membrane. Its subcellular location is the melanosome. Its function is as follows. Calcium-regulated membrane-binding protein whose affinity for calcium is greatly enhanced by anionic phospholipids. It binds two calcium ions with high affinity. May be involved in heat-stress response. Inhibits PCSK9-enhanced LDLR degradation, probably reduces PCSK9 protein levels via a translational mechanism but also competes with LDLR for binding with PCSK9. Binds to endosomes damaged by phagocytosis of particulate wear debris and participates in endosomal membrane stabilization, thereby limiting NLRP3 inflammasome activation. Required for endothelial cell surface plasmin generation and may support fibrinolytic surveillance and neoangiogenesis. Functionally, (Microbial infection) May serve as a receptor for classical swine fever virus (CSFV). Promotes CSFV infection. In Sus scrofa (Pig), this protein is Annexin A2 (ANXA2).